A 396-amino-acid chain; its full sequence is MTCSLLPSEQSSGASFLPKSNASFPWGSLDEDELDDSLLEFSDGEEDDGHFSFTEEEIEMLLKDDDGGHNEYRPRKSQILPDIPQENSLYSLGPAAETPGFLKLPQLSTSVGHGPTPSKSLNRHFVLEKNLIKVTVVAPFNPTVCDPVLDKDKIDSSKETENPASLREQTREDDPQPNESKRCTEPEGVSPNTSAWDGPLLSSPSNNNIEQTASDKNIPESKKPTPVFSQISNHSEVPNRKNSGSHKSGCEVRIPVVSSSSNRHAFDKDSGEAKGERRLGKVIPVLQTRTRMFSQSELEKQKDIYLSKVIAHIEDPGDSNQGTLGELDALMDQVHMQHPDWQHPSDLTTRNYARFRQRPLQRYSLSQWVDRNKRSHHRFQRLPDFSYSPYVSSHQQ.

The interval 145–249 (CDPVLDKDKI…RKNSGSHKSG (105 aa)) is disordered. Composition is skewed to basic and acidic residues over residues 148 to 161 (VLDKDKIDSSKETE) and 168 to 185 (EQTREDDPQPNESKRCTE). Polar residues-rich tracts occupy residues 202-215 (SSPSNNNIEQTASD) and 227-246 (VFSQISNHSEVPNRKNSGSH).

Interacts with S100P.

It is found in the nucleus. The polypeptide is S100P-binding protein (Mus musculus (Mouse)).